The primary structure comprises 216 residues: Adenylate kinase (216 aa).

10-15 (GAGKGT) serves as a coordination point for ATP. The interval 30–59 (STGDMFRAAIKEGTPLGLQAKEYMDRGDLV) is NMP. AMP is bound by residues threonine 31, arginine 36, 57–59 (DLV), 85–88 (GFPR), and glutamine 92. The interval 126–163 (GRRICKNCGATYHLVFNPPAKSGVCDKCGGELYQRADD) is LID. Arginine 127 is a binding site for ATP. Zn(2+) is bound by residues cysteine 130 and cysteine 133. 136-137 (TY) contributes to the ATP binding site. Zn(2+)-binding residues include cysteine 150 and cysteine 153. Positions 160 and 171 each coordinate AMP. Glutamine 199 is a binding site for ATP.

Belongs to the adenylate kinase family. In terms of assembly, monomer.

The protein resides in the cytoplasm. It catalyses the reaction AMP + ATP = 2 ADP. Its pathway is purine metabolism; AMP biosynthesis via salvage pathway; AMP from ADP: step 1/1. Functionally, catalyzes the reversible transfer of the terminal phosphate group between ATP and AMP. Plays an important role in cellular energy homeostasis and in adenine nucleotide metabolism. The polypeptide is Adenylate kinase (Geobacillus sp. (strain WCH70)).